Consider the following 277-residue polypeptide: Large ribosomal subunit protein uL2 (277 aa).

Positions 218–277 (PTVRGSVMNPNDHPHGGGEGKSPIGHPSPLTPWGKPALGYKTRKNKKYSDGMIIKRRGQK) are disordered.

This sequence belongs to the universal ribosomal protein uL2 family. In terms of assembly, part of the 50S ribosomal subunit. Forms a bridge to the 30S subunit in the 70S ribosome.

Its function is as follows. One of the primary rRNA binding proteins. Required for association of the 30S and 50S subunits to form the 70S ribosome, for tRNA binding and peptide bond formation. It has been suggested to have peptidyltransferase activity; this is somewhat controversial. Makes several contacts with the 16S rRNA in the 70S ribosome. This Clostridium novyi (strain NT) protein is Large ribosomal subunit protein uL2.